The sequence spans 107 residues: Putative double-stranded DNA mimic protein ETA_15890 (107 aa).

Belongs to the putative dsDNA mimic protein family.

Its function is as follows. May act as a double-stranded DNA (dsDNA) mimic. Probably regulates the activity of a dsDNA-binding protein. The protein is Putative double-stranded DNA mimic protein ETA_15890 of Erwinia tasmaniensis (strain DSM 17950 / CFBP 7177 / CIP 109463 / NCPPB 4357 / Et1/99).